The following is a 263-amino-acid chain: Imidazole glycerol phosphate synthase subunit HisF (263 aa).

Residues aspartate 11 and aspartate 130 contribute to the active site.

Belongs to the HisA/HisF family. In terms of assembly, heterodimer of HisH and HisF.

The protein localises to the cytoplasm. It catalyses the reaction 5-[(5-phospho-1-deoxy-D-ribulos-1-ylimino)methylamino]-1-(5-phospho-beta-D-ribosyl)imidazole-4-carboxamide + L-glutamine = D-erythro-1-(imidazol-4-yl)glycerol 3-phosphate + 5-amino-1-(5-phospho-beta-D-ribosyl)imidazole-4-carboxamide + L-glutamate + H(+). It participates in amino-acid biosynthesis; L-histidine biosynthesis; L-histidine from 5-phospho-alpha-D-ribose 1-diphosphate: step 5/9. Functionally, IGPS catalyzes the conversion of PRFAR and glutamine to IGP, AICAR and glutamate. The HisF subunit catalyzes the cyclization activity that produces IGP and AICAR from PRFAR using the ammonia provided by the HisH subunit. In Herpetosiphon aurantiacus (strain ATCC 23779 / DSM 785 / 114-95), this protein is Imidazole glycerol phosphate synthase subunit HisF.